A 348-amino-acid polypeptide reads, in one-letter code: MSESFQNKAFKTKIVFDEAKPTDSDAELTAQVQFAESNTFLPEVKADDDIEEQLSHTLASKTKKRSSWFKGLLIAGAAMTGWQTVDYVVSAYQTGDWLALGWSVIVAGIATMGITALGRELFKLRRLKQRQTEREQAQVLLDADGIGQGKAFCMKLAKLSDIRDEHAGYDRWVQSLAATHNDREVLELYDQMVLSHQDRLSRQLVAKYSSEAAVMVAMSPLAVADMLLVAWRNFKLIEQVSVVYGVELGYWSRIKLVKLVLANMAFAGATEVIADTGMDMLSMDLAGRVSTRVAQGVGVGLLTGRLGLKAITLMRPLPWQPDQQPKLSEIRRDLLLKLTHKNESSKNN.

A run of 3 helical transmembrane segments spans residues 71–91 (GLLI…VVSA), 97–117 (WLAL…ITAL), and 211–231 (EAAV…LVAW).

This sequence belongs to the UPF0283 family.

The protein resides in the cell inner membrane. The protein is UPF0283 membrane protein PBPRA2435 of Photobacterium profundum (strain SS9).